Consider the following 124-residue polypeptide: Ribonuclease pancreatic (124 aa).

Positions 1–13 (KESAAAKFERQHM) are enriched in basic and acidic residues. Residues 1 to 24 (KESAAAKFERQHMDPSMSSASSSN) are disordered. Positions 7 and 10 each coordinate substrate. The Proton acceptor role is filled by H12. 4 disulfides stabilise this stretch: C26–C84, C40–C95, C58–C110, and C65–C72. Substrate is bound by residues 41–45 (KPVNT), K66, and R85. H119 acts as the Proton donor in catalysis.

It belongs to the pancreatic ribonuclease family. As to quaternary structure, monomer. Interacts with and forms tight 1:1 complexes with RNH1. Dimerization of two such complexes may occur. Interaction with RNH1 inhibits this protein. Pancreas.

The protein resides in the secreted. The enzyme catalyses an [RNA] containing cytidine + H2O = an [RNA]-3'-cytidine-3'-phosphate + a 5'-hydroxy-ribonucleotide-3'-[RNA].. The catalysed reaction is an [RNA] containing uridine + H2O = an [RNA]-3'-uridine-3'-phosphate + a 5'-hydroxy-ribonucleotide-3'-[RNA].. Its function is as follows. Endonuclease that catalyzes the cleavage of RNA on the 3' side of pyrimidine nucleotides. Acts on single-stranded and double-stranded RNA. The polypeptide is Ribonuclease pancreatic (RNASE1) (Dama dama (Fallow deer)).